The following is a 466-amino-acid chain: 3-isopropylmalate dehydratase large subunit (466 aa).

[4Fe-4S] cluster is bound by residues Cys-347, Cys-407, and Cys-410.

The protein belongs to the aconitase/IPM isomerase family. LeuC type 1 subfamily. In terms of assembly, heterodimer of LeuC and LeuD. Requires [4Fe-4S] cluster as cofactor.

It catalyses the reaction (2R,3S)-3-isopropylmalate = (2S)-2-isopropylmalate. It functions in the pathway amino-acid biosynthesis; L-leucine biosynthesis; L-leucine from 3-methyl-2-oxobutanoate: step 2/4. In terms of biological role, catalyzes the isomerization between 2-isopropylmalate and 3-isopropylmalate, via the formation of 2-isopropylmaleate. The chain is 3-isopropylmalate dehydratase large subunit from Cronobacter sakazakii (strain ATCC BAA-894) (Enterobacter sakazakii).